The following is a 461-amino-acid chain: Argininosuccinate lyase (461 aa).

The protein belongs to the lyase 1 family. Argininosuccinate lyase subfamily.

The protein resides in the cytoplasm. It catalyses the reaction 2-(N(omega)-L-arginino)succinate = fumarate + L-arginine. Its pathway is amino-acid biosynthesis; L-arginine biosynthesis; L-arginine from L-ornithine and carbamoyl phosphate: step 3/3. This chain is Argininosuccinate lyase, found in Dehalococcoides mccartyi (strain ATCC BAA-2266 / KCTC 15142 / 195) (Dehalococcoides ethenogenes (strain 195)).